Here is a 312-residue protein sequence, read N- to C-terminus: Glyoxylate/hydroxypyruvate reductase A (312 aa).

The active site involves Arg227. The active-site Proton donor is His275.

This sequence belongs to the D-isomer specific 2-hydroxyacid dehydrogenase family. GhrA subfamily.

It is found in the cytoplasm. It carries out the reaction glycolate + NADP(+) = glyoxylate + NADPH + H(+). The catalysed reaction is (R)-glycerate + NAD(+) = 3-hydroxypyruvate + NADH + H(+). The enzyme catalyses (R)-glycerate + NADP(+) = 3-hydroxypyruvate + NADPH + H(+). Catalyzes the NADPH-dependent reduction of glyoxylate and hydroxypyruvate into glycolate and glycerate, respectively. The polypeptide is Glyoxylate/hydroxypyruvate reductase A (Escherichia coli (strain UTI89 / UPEC)).